Here is a 328-residue protein sequence, read N- to C-terminus: Tryptophan--tRNA ligase (328 aa).

ATP-binding positions include 9–11 (QPS) and 17–18 (GN). The 'HIGH' region motif lies at 10 to 18 (PSGVITIGN). Asp132 provides a ligand contact to L-tryptophan. Residues 144–146 (GED), Ile183, and 192–196 (KMSKS) contribute to the ATP site. Residues 192 to 196 (KMSKS) carry the 'KMSKS' region motif.

The protein belongs to the class-I aminoacyl-tRNA synthetase family. Homodimer.

It is found in the cytoplasm. The catalysed reaction is tRNA(Trp) + L-tryptophan + ATP = L-tryptophyl-tRNA(Trp) + AMP + diphosphate + H(+). Inhibited by indolmycin, a competitive inhibitor for tryptophan. Catalyzes the attachment of tryptophan to tRNA(Trp). The sequence is that of Tryptophan--tRNA ligase from Geobacillus stearothermophilus (Bacillus stearothermophilus).